Consider the following 380-residue polypeptide: Queuine tRNA-ribosyltransferase (380 aa).

Catalysis depends on aspartate 96, which acts as the Proton acceptor. Substrate contacts are provided by residues 96 to 100 (DSGGF), aspartate 150, glutamine 193, and glycine 220. Residues 251-257 (GVGAPDS) form an RNA binding region. The Nucleophile role is filled by aspartate 270. Residues 275-279 (TRIAR) form an RNA binding; important for wobble base 34 recognition region. Positions 308, 310, 313, and 339 each coordinate Zn(2+).

This sequence belongs to the queuine tRNA-ribosyltransferase family. In terms of assembly, homodimer. Within each dimer, one monomer is responsible for RNA recognition and catalysis, while the other monomer binds to the replacement base PreQ1. Zn(2+) serves as cofactor.

The enzyme catalyses 7-aminomethyl-7-carbaguanine + guanosine(34) in tRNA = 7-aminomethyl-7-carbaguanosine(34) in tRNA + guanine. The protein operates within tRNA modification; tRNA-queuosine biosynthesis. In terms of biological role, catalyzes the base-exchange of a guanine (G) residue with the queuine precursor 7-aminomethyl-7-deazaguanine (PreQ1) at position 34 (anticodon wobble position) in tRNAs with GU(N) anticodons (tRNA-Asp, -Asn, -His and -Tyr). Catalysis occurs through a double-displacement mechanism. The nucleophile active site attacks the C1' of nucleotide 34 to detach the guanine base from the RNA, forming a covalent enzyme-RNA intermediate. The proton acceptor active site deprotonates the incoming PreQ1, allowing a nucleophilic attack on the C1' of the ribose to form the product. After dissociation, two additional enzymatic reactions on the tRNA convert PreQ1 to queuine (Q), resulting in the hypermodified nucleoside queuosine (7-(((4,5-cis-dihydroxy-2-cyclopenten-1-yl)amino)methyl)-7-deazaguanosine). This Streptococcus pyogenes serotype M1 protein is Queuine tRNA-ribosyltransferase.